The following is a 70-amino-acid chain: Large ribosomal subunit protein bL31 (70 aa).

Positions 16, 18, 38, and 41 each coordinate Zn(2+).

The protein belongs to the bacterial ribosomal protein bL31 family. Type A subfamily. Part of the 50S ribosomal subunit. Zn(2+) serves as cofactor.

In terms of biological role, binds the 23S rRNA. The sequence is that of Large ribosomal subunit protein bL31 from Bifidobacterium longum (strain DJO10A).